Reading from the N-terminus, the 455-residue chain is Golgi pH regulator (455 aa).

4 helical membrane passes run 46–66, 79–99, 111–131, and 150–170; these read ITFAFSCTMFELIIFEILGAL, LYVILLVLIFVVPFYIGYFVV, LFACVVWFTFMYFFWKLGDPF, and VGVIGVTLMALLSGFGAVNCP. N-linked (GlcNAc...) asparagine glycosylation is found at asparagine 180 and asparagine 243. Helical transmembrane passes span 290–310, 343–363, 378–398, and 425–445; these read GYFFSIYCVWKIFMATINIVF, ISFILVGIIIVTSIRGLLITL, VIVLVLAQIMGMYFVSSVLLM, and WFDVIFLVSALSSILFLYLAH.

This sequence belongs to the Golgi pH regulator (TC 1.A.38) family. Homotrimer.

It is found in the golgi apparatus membrane. The catalysed reaction is iodide(out) = iodide(in). The enzyme catalyses chloride(in) = chloride(out). It catalyses the reaction bromide(in) = bromide(out). It carries out the reaction fluoride(in) = fluoride(out). Functionally, voltage-gated channel that enables the transfer of anions such as iodide, chloride, bromide and fluoride which may function in counter-ion conductance and participates in Golgi acidification. In Salmo salar (Atlantic salmon), this protein is Golgi pH regulator.